The sequence spans 932 residues: Protocadherin gamma-A12 (932 aa).

The first 29 residues, 1–29 (MIPARLHRDYKGLVLLGILLGTLWETGCT), serve as a signal peptide directing secretion. Cadherin domains lie at 30-133 (QIRY…APYF), 134-242 (RESE…APAF), 243-347 (AQPE…APEV), 348-452 (VLTS…PPVF), 453-562 (PQAS…APEI), and 570-683 (DGST…SPAN). Residues 30–692 (QIRYSVPEEL…NSETSDLTLY (663 aa)) are Extracellular-facing. N-linked (GlcNAc...) asparagine glycosylation is found at Asn-265, Asn-419, and Asn-545. A helical membrane pass occupies residues 693–713 (LVVAVAAVSCVFLAFVILLLA). The Cytoplasmic portion of the chain corresponds to 714–932 (LRLRRWHKSR…KKKSGKKEKK (219 aa)). 2 disordered regions span residues 803-841 (SHGLIEQAPPNTDWRFSQAQRPGTSGSQNGDDTGTWPNN) and 902-932 (ATLTNAAGKRDGKAPAGGNGNKKKSGKKEKK). Polar residues predominate over residues 816–841 (WRFSQAQRPGTSGSQNGDDTGTWPNN). Basic residues predominate over residues 922–932 (NKKKSGKKEKK).

The protein resides in the cell membrane. Functionally, potential calcium-dependent cell-adhesion protein. May be involved in the establishment and maintenance of specific neuronal connections in the brain. The protein is Protocadherin gamma-A12 (PCDHGA12) of Homo sapiens (Human).